The chain runs to 43 residues: Protein PsbN (43 aa).

A helical transmembrane segment spans residues 7 to 27 (LSISIGVMVVAITGFSIYTAF).

It belongs to the PsbN family.

Its subcellular location is the cellular thylakoid membrane. Functionally, may play a role in photosystem I and II biogenesis. The polypeptide is Protein PsbN (Trichodesmium erythraeum (strain IMS101)).